Consider the following 489-residue polypeptide: Betaine aldehyde dehydrogenase (489 aa).

Thr26 and Asp93 together coordinate K(+). Position 150–152 (150–152 (GAW)) interacts with NAD(+). Lys162 functions as the Charge relay system in the catalytic mechanism. 176–179 (KPSE) lines the NAD(+) pocket. Val180 lines the K(+) pocket. Residue 229–232 (GVET) coordinates NAD(+). Leu245 contributes to the K(+) binding site. The active-site Proton acceptor is the Glu251. 3 residues coordinate NAD(+): Gly253, Cys285, and Glu386. Residue Cys285 is the Nucleophile of the active site. Cys285 carries the cysteine sulfenic acid (-SOH) modification. K(+) contacts are provided by Lys456 and Gly459. The Charge relay system role is filled by Glu463.

This sequence belongs to the aldehyde dehydrogenase family. In terms of assembly, dimer of dimers. Requires K(+) as cofactor.

It catalyses the reaction betaine aldehyde + NAD(+) + H2O = glycine betaine + NADH + 2 H(+). It functions in the pathway amine and polyamine biosynthesis; betaine biosynthesis via choline pathway; betaine from betaine aldehyde: step 1/1. Functionally, involved in the biosynthesis of the osmoprotectant glycine betaine. Catalyzes the irreversible oxidation of betaine aldehyde to the corresponding acid. The protein is Betaine aldehyde dehydrogenase of Burkholderia cenocepacia (strain ATCC BAA-245 / DSM 16553 / LMG 16656 / NCTC 13227 / J2315 / CF5610) (Burkholderia cepacia (strain J2315)).